We begin with the raw amino-acid sequence, 93 residues long: DNA-directed RNA polymerase subunit omega (93 aa).

It belongs to the RNA polymerase subunit omega family. In terms of assembly, the RNAP catalytic core consists of 2 alpha, 1 beta, 1 beta' and 1 omega subunit. When a sigma factor is associated with the core the holoenzyme is formed, which can initiate transcription.

It carries out the reaction RNA(n) + a ribonucleoside 5'-triphosphate = RNA(n+1) + diphosphate. In terms of biological role, promotes RNA polymerase assembly. Latches the N- and C-terminal regions of the beta' subunit thereby facilitating its interaction with the beta and alpha subunits. The polypeptide is DNA-directed RNA polymerase subunit omega (Actinobacillus pleuropneumoniae serotype 7 (strain AP76)).